The primary structure comprises 33 residues: uncharacterized protein (33 aa).

The segment at 1-24 (MRTGTRCDLGELSHPRKTLPPRGM) is disordered.

This is an uncharacterized protein from Treponema pallidum (strain Nichols).